A 300-amino-acid polypeptide reads, in one-letter code: Small ribosomal subunit protein uS2 (300 aa).

Residues Arg228–Ala300 form a disordered region. Positions Ala258–Ala300 are enriched in low complexity.

Belongs to the universal ribosomal protein uS2 family.

The chain is Small ribosomal subunit protein uS2 from Rhodococcus jostii (strain RHA1).